The chain runs to 708 residues: Pre-mRNA-splicing factor SPP382 (708 aa).

The G-patch domain occupies 61–108 (TYGIGAKLLSSMGYVAGKGLGKDGSGITTPIETQSRPMHNAGLGMFSN).

As to quaternary structure, component of the NTR complex (NTC-related complex), composed of NTR1, NTR2 and PRP43. Interacts with CLF1 and NTR2. Interacts with PRP43 and PRP45.

Its subcellular location is the cytoplasm. The protein resides in the nucleus. Involved in pre-mRNA splicing and spliceosome disassembly. Promotes release of excised lariat intron from the spliceosome by acting as a receptor for PRP43. This targeting of PRP43 leads to disassembly of the spliceosome with the separation of the U2, U5, U6 snRNPs and the NTC complex. This chain is Pre-mRNA-splicing factor SPP382 (SPP382), found in Saccharomyces cerevisiae (strain ATCC 204508 / S288c) (Baker's yeast).